Reading from the N-terminus, the 557-residue chain is Tight junction-associated protein 1 (557 aa).

A disordered region spans residues 1-37; that stretch reads MTSAAPAKKPYRKAPPEHRELRLEIPGSRLEQEEPLT. Position 2 is an N-acetylthreonine (threonine 2). Residues 14–23 are compositionally biased toward basic and acidic residues; that stretch reads APPEHRELRL. Positions 42 to 171 form a coiled coil; the sequence is MKLLQEENEE…EELNERYRLD (130 aa). Disordered regions lie at residues 266 to 303 and 309 to 328; these read MSEGVPGDPASPPAPGSPTPQPNGECHSLGTARGSPEE and AFEKLNPYPTPSPPHPLYPG. Residues 274–286 are compositionally biased toward pro residues; that stretch reads PASPPAPGSPTPQ. Position 300 is a phosphoserine (serine 300). Residues 316-325 show a composition bias toward pro residues; that stretch reads YPTPSPPHPL. Threonine 318 is modified (phosphothreonine). Phosphoserine is present on residues serine 320 and serine 345. A disordered region spans residues 364 to 409; the sequence is EEGSERARPSPVPSTPASAQASPHHQPSPAPLTLSAPASSASSEED. Positions 378 to 388 are enriched in polar residues; sequence TPASAQASPHH. Residues 394 to 405 show a composition bias toward low complexity; it reads PLTLSAPASSAS. Threonine 422 is modified (phosphothreonine). Residues 439–456 are compositionally biased toward basic and acidic residues; that stretch reads LPELQRHFAHSPADRDEV. The segment at 439 to 557 is disordered; the sequence is LPELQRHFAH…QAQEQGNLLN (119 aa). Phosphoserine is present on serine 491. The span at 530-542 shows a compositional bias: basic residues; it reads RSPKRMGVHHLHR. Position 545 is a phosphoserine (serine 545). Residues 546-557 show a composition bias toward polar residues; it reads LTQAQEQGNLLN.

Interacts with DLG1. Interacts with ARF6 (GTP-bound form). As to expression, ubiquitously expressed.

It is found in the golgi apparatus. The protein resides in the trans-Golgi network. It localises to the cell junction. Its subcellular location is the tight junction. The protein localises to the cell membrane. Its function is as follows. Plays a role in regulating the structure of the Golgi apparatus. This is Tight junction-associated protein 1 from Homo sapiens (Human).